Here is a 918-residue protein sequence, read N- to C-terminus: Glutamate receptor ionotropic, kainate 1 (918 aa).

The first 30 residues, 1 to 30, serve as a signal peptide directing secretion; it reads MELGTLLAQPGLWTRDTSWALLYFLCYILP. Topologically, residues 31-576 are extracellular; sequence QTAPQVLRIG…VFSFLNPLSP (546 aa). N68, N74, N276, N379, N428, N439, and N446 each carry an N-linked (GlcNAc...) asparagine glycan. Positions 531, 533, and 538 each coordinate L-glutamate. The N-linked (GlcNAc...) asparagine glycan is linked to N561. A helical membrane pass occupies residues 577-597; it reads DIWMYVLLACLGVSCVLFVIA. The Cytoplasmic segment spans residues 598–653; the sequence is RFTPYEWYNPHPCNPDSDVVENNFTLLNSFWFGVGALMQQGSELMPKALSTRIVGG. The helical transmembrane segment at 654–674 threads the bilayer; sequence IWWFFTLIIISSYTANLAAFL. The Extracellular segment spans residues 675-834; sequence TVERMESPID…KEASALGVEN (160 aa). L-glutamate-binding residues include S704 and T705. A Phosphoserine; by PKC modification is found at S725. E753 contributes to the L-glutamate binding site. A Phosphothreonine; by PKC modification is found at T761. A disulfide bond links C765 and C819. A glycan (N-linked (GlcNAc...) asparagine) is linked at N766. A helical membrane pass occupies residues 835–855; it reads IGGIFIVLAAGLVLSVFVAIG. The Cytoplasmic segment spans residues 856 to 918; that stretch reads EFIYKSRKNN…IRKQSSVHTV (63 aa).

It belongs to the glutamate-gated ion channel (TC 1.A.10.1) family. GRIK1 subfamily. In terms of assembly, homotetramer or heterotetramer of pore-forming glutamate receptor subunits. Tetramers may be formed by the dimerization of dimers. Can form functional heteromeric receptors with GRIK4 and GRIK5. Interacts with KLHL17.

The protein resides in the cell membrane. It is found in the postsynaptic cell membrane. The enzyme catalyses Ca(2+)(in) = Ca(2+)(out). Functionally, ionotropic glutamate receptor that functions as a cation-permeable ligand-gated ion channel, gated by L-glutamate and the glutamatergic agonist kainic acid. L-glutamate acts as an excitatory neurotransmitter at many synapses in the central nervous system. Binding of the excitatory neurotransmitter L-glutamate induces a conformation change, leading to the opening of the cation channel, and thereby converts the chemical signal to an electrical impulse. The receptor then desensitizes rapidly and enters a transient inactive state, characterized by the presence of bound agonist. The polypeptide is Glutamate receptor ionotropic, kainate 1 (GRIK1) (Macaca fascicularis (Crab-eating macaque)).